Reading from the N-terminus, the 441-residue chain is MKMRSKYAIILFFVVALVIIEKERNIISRVSDKFTLKFPHAESVAPNNTISARSLTKNNSLLANSVAAVWKLLKARRSYSSLQSAASSDVRKVLKGRKHLLLMATTRTGSSFVGEFFNQNNDIFYLFEPLWHVEKTVTFEPGGMNAVASSIIYRDVVQQLMLCDLYTLENFLFPMADRHLTGILFRRGSSKSLCEGEVCTPPKKGGTEKFPCRLRDCGLLNLTLATQACLQKQHVAIKTVPLRQLEFLRPLVEDFRINLKIIQLVRDPRAVLASRMVAFPSKYNAWKKWANEGRVPDDDEVGKIRGNCENLRATAQLGISQPPWLKDRFLLMRYEDIALEPVKRAQEMYRFSGIPMTPEVKKWIYENTQVSKASNNIYSTHKISSEQFEKWRLGLPFKIARVVQQVCEPAMKLFGYKLVKDAATLANRSASLLENRNFWIT.

The Cytoplasmic segment spans residues 1–4 (MKMR). A helical; Signal-anchor for type II membrane protein transmembrane segment spans residues 5–21 (SKYAIILFFVVALVIIE). The Lumenal portion of the chain corresponds to 22 to 441 (KERNIISRVS…LLENRNFWIT (420 aa)). N-linked (GlcNAc...) asparagine glycans are attached at residues N47 and N58. Residue 106 to 112 (TRTGSSF) coordinates 3'-phosphoadenylyl sulfate. A glycan (N-linked (GlcNAc...) asparagine) is linked at N221. 3'-phosphoadenylyl sulfate is bound at residue 266–274 (RDPRAVLAS). An N-linked (GlcNAc...) asparagine glycan is attached at N427.

Belongs to the sulfotransferase 1 family. Gal/GlcNAc/GalNAc subfamily. Post-translationally, N-glycosylated. In electric organ, it is moderately expressed in spinal cord and electric lobe and undetectable in non-neural tissues. Expressed in a punctate distribution in the innervated portion of electrocytes. In the CNS, it is localized within the somas of motor neurons and neurons of the electromotor nucleus.

Its subcellular location is the golgi apparatus membrane. The catalysed reaction is chondroitin beta-D-glucuronate + n 3'-phosphoadenylyl sulfate = chondroitin 6'-sulfate + n adenosine 3',5'-bisphosphate + n H(+). It catalyses the reaction 3'-phosphoadenylyl sulfate + keratan = adenosine 3',5'-bisphosphate + keratan 6'-sulfate.. Functionally, sulfotransferase that utilizes 3'-phospho-5'-adenylyl sulfate (PAPS) as sulfonate donor to catalyze the transfer of sulfate to position 6 of the N-acetylgalactosamine (GalNAc) residue of chondroitin. Chondroitin sulfate constitutes the predominant proteoglycan present in cartilage and is distributed on the surfaces of many cells and extracellular matrices. Catalyzes with a lower efficiency the sulfation of Gal residues of keratan sulfate, another glycosaminoglycan. Can also catalyze the sulfation of the Gal residues in sialyl N-acetyllactosamine (sialyl LacNAc) oligosaccharides. The chain is Carbohydrate sulfotransferase 3 (CHST3) from Tetronarce californica (Pacific electric ray).